Here is a 217-residue protein sequence, read N- to C-terminus: Small ribosomal subunit protein uS3 (217 aa).

One can recognise a KH type-2 domain in the interval 40 to 110 (IRELVNKSFT…EVYINIHEVR (71 aa)).

The protein belongs to the universal ribosomal protein uS3 family. Part of the 30S ribosomal subunit. Forms a tight complex with proteins S10 and S14.

In terms of biological role, binds the lower part of the 30S subunit head. Binds mRNA in the 70S ribosome, positioning it for translation. This Rickettsia bellii (strain OSU 85-389) protein is Small ribosomal subunit protein uS3.